The primary structure comprises 124 residues: Histone H2A (124 aa).

Over residues 1-18 the composition is skewed to basic residues; it reads MSGRGKSGKARTKAKSRS. Residues 1–21 are disordered; that stretch reads MSGRGKSGKARTKAKSRSSRA. An N-acetylserine modification is found at S2. Residue S2 is modified to Phosphoserine. Q104 is subject to N5-methylglutamine. K119 participates in a covalent cross-link: Glycyl lysine isopeptide (Lys-Gly) (interchain with G-Cter in ubiquitin).

It belongs to the histone H2A family. The nucleosome is a histone octamer containing two molecules each of H2A, H2B, H3 and H4 assembled in one H3-H4 heterotetramer and two H2A-H2B heterodimers. The octamer wraps approximately 147 bp of DNA. Monoubiquitination of Lys-119 gives a specific tag for epigenetic transcriptional repression. Post-translationally, phosphorylation of Ser-2 directly represses transcription.

It is found in the nucleus. The protein localises to the chromosome. Its function is as follows. Core component of nucleosome. Nucleosomes wrap and compact DNA into chromatin, limiting DNA accessibility to the cellular machineries which require DNA as a template. Histones thereby play a central role in transcription regulation, DNA repair, DNA replication and chromosomal stability. DNA accessibility is regulated via a complex set of post-translational modifications of histones, also called histone code, and nucleosome remodeling. This is Histone H2A from Paracentrotus lividus (Common sea urchin).